The primary structure comprises 324 residues: Probable carboxylesterase 9 (324 aa).

Positions 86–88 match the Involved in the stabilization of the negatively charged intermediate by the formation of the oxyanion hole motif; it reads HGS. Active-site residues include Ser-171, Asp-272, and His-302.

It belongs to the 'GDXG' lipolytic enzyme family. Expressed in flowers.

It carries out the reaction a carboxylic ester + H2O = an alcohol + a carboxylate + H(+). Carboxylesterase acting on esters with varying acyl chain length. In Arabidopsis thaliana (Mouse-ear cress), this protein is Probable carboxylesterase 9 (CXE9).